The chain runs to 416 residues: CC-adding tRNA nucleotidyltransferase (416 aa).

Residue 31-34 (GAVR) coordinates CTP. Mg(2+) is bound by residues Asp46 and Asp48. CTP is bound by residues 106–107 (RD), Asn111, 148–157 (DPLRLLRAYR), and Arg188.

The protein belongs to the tRNA nucleotidyltransferase/poly(A) polymerase family. Mg(2+) serves as cofactor.

The catalysed reaction is a tRNA precursor + 2 CTP = a tRNA with a 3' CC end + 2 diphosphate. Its function is as follows. tRNA nucleotidyltransferase involved in the synthesis of the tRNA CCA terminus. Adds the two cytidine residues to tRNA. The polypeptide is CC-adding tRNA nucleotidyltransferase (Synechocystis sp. (strain ATCC 27184 / PCC 6803 / Kazusa)).